Reading from the N-terminus, the 443-residue chain is ATP-dependent protease ATPase subunit HslU (443 aa).

Residues isoleucine 18 and 60-65 (GVGKTE) contribute to the ATP site. Residues 138–158 (PAENQWGEKEQNEDKGTRQTF) form a disordered region. A compositionally biased stretch (basic and acidic residues) spans 143–154 (WGEKEQNEDKGT). Aspartate 255, glutamate 321, and arginine 393 together coordinate ATP.

The protein belongs to the ClpX chaperone family. HslU subfamily. In terms of assembly, a double ring-shaped homohexamer of HslV is capped on each side by a ring-shaped HslU homohexamer. The assembly of the HslU/HslV complex is dependent on binding of ATP.

The protein localises to the cytoplasm. Functionally, ATPase subunit of a proteasome-like degradation complex; this subunit has chaperone activity. The binding of ATP and its subsequent hydrolysis by HslU are essential for unfolding of protein substrates subsequently hydrolyzed by HslV. HslU recognizes the N-terminal part of its protein substrates and unfolds these before they are guided to HslV for hydrolysis. The protein is ATP-dependent protease ATPase subunit HslU of Pseudoalteromonas atlantica (strain T6c / ATCC BAA-1087).